A 501-amino-acid chain; its full sequence is L-aspartate decarboxylase dtxS4 (501 aa).

Position 106–108 (106–108 (KLT)) interacts with substrate. An N6-(pyridoxal phosphate)lysine modification is found at Lys320. Arg474 serves as a coordination point for substrate.

This sequence belongs to the group II decarboxylase family. The cofactor is pyridoxal 5'-phosphate.

The enzyme catalyses L-aspartate + H(+) = beta-alanine + CO2. It functions in the pathway secondary metabolite biosynthesis. Functionally, L-aspartate decarboxylase; part of the gene cluster that mediates the biosynthesis of destruxins, insecticidal cyclic hexadepsipeptides which induce flaccid paralysis and visceral muscle contraction in insects through targeting the calcium channels and vacuolar-type ATPases. The aldo-keto reductase dtxS3 converts alpha-ketoisocaproic acid from deaminated leucine into alpha-hydroxyisocaproic acid (HIC), which is the first substrate for destruxin assembly by dtxS1. L-aspartate decarboxylase dtxS4 converts aspartic acid into beta-alanine, the last substrate for the destruxin assembly line performed by dtxS1. The nonribosomal peptide synthetase dtxS1 synthesizes destruxins B and B2, whereas the cytochrome P450 monooxygenase dtxS2 is required to convert destruxin B into other destruxin derivatives, including destructins C, D, A and E. Destruxin E-diol (ED) is further produced in a non-enzymatic manner from destruxin E. Destruxins play an important role in virulence and escape from insect host immune defenses. This chain is L-aspartate decarboxylase dtxS4, found in Metarhizium robertsii (strain ARSEF 23 / ATCC MYA-3075) (Metarhizium anisopliae (strain ARSEF 23)).